The sequence spans 437 residues: Amino-acid acetyltransferase (437 aa).

The 141-residue stretch at 289–429 (ENIRLATSFD…EHYNYQRMSK (141 aa)) folds into the N-acetyltransferase domain.

The protein belongs to the acetyltransferase family. ArgA subfamily.

It is found in the cytoplasm. The enzyme catalyses L-glutamate + acetyl-CoA = N-acetyl-L-glutamate + CoA + H(+). It participates in amino-acid biosynthesis; L-arginine biosynthesis; N(2)-acetyl-L-ornithine from L-glutamate: step 1/4. In Actinobacillus pleuropneumoniae serotype 5b (strain L20), this protein is Amino-acid acetyltransferase.